The following is a 329-amino-acid chain: GTP 3',8-cyclase (329 aa).

In terms of domain architecture, Radical SAM core spans 1–229 (MNQIDYLRIS…EGQVRGNGPA (229 aa)). Arginine 8 provides a ligand contact to GTP. Positions 15 and 19 each coordinate [4Fe-4S] cluster. Tyrosine 21 is a binding site for S-adenosyl-L-methionine. Cysteine 22 is a [4Fe-4S] cluster binding site. GTP is bound at residue arginine 60. Glycine 64 is an S-adenosyl-L-methionine binding site. Threonine 91 contributes to the GTP binding site. Serine 115 contacts S-adenosyl-L-methionine. Lysine 155 is a GTP binding site. Methionine 189 lines the S-adenosyl-L-methionine pocket. Residues cysteine 252 and cysteine 255 each coordinate [4Fe-4S] cluster. 257-259 (RLR) serves as a coordination point for GTP. Cysteine 269 serves as a coordination point for [4Fe-4S] cluster.

It belongs to the radical SAM superfamily. MoaA family. In terms of assembly, monomer and homodimer. Requires [4Fe-4S] cluster as cofactor.

It catalyses the reaction GTP + AH2 + S-adenosyl-L-methionine = (8S)-3',8-cyclo-7,8-dihydroguanosine 5'-triphosphate + 5'-deoxyadenosine + L-methionine + A + H(+). The protein operates within cofactor biosynthesis; molybdopterin biosynthesis. In terms of biological role, catalyzes the cyclization of GTP to (8S)-3',8-cyclo-7,8-dihydroguanosine 5'-triphosphate. In Microcystis aeruginosa (strain NIES-843 / IAM M-2473), this protein is GTP 3',8-cyclase.